We begin with the raw amino-acid sequence, 517 residues long: GMP synthase [glutamine-hydrolyzing] (517 aa).

The Glutamine amidotransferase type-1 domain maps to 11 to 202 (KIIVLDFGSQ…AFNVCDAKAN (192 aa)). C88 (nucleophile) is an active-site residue. Residues H176 and E178 contribute to the active site. The region spanning 203 to 392 (WTMDDFIEMQ…LGIPHDLVWR (190 aa)) is the GMPS ATP-PPase domain. 230 to 236 (SGGVDSS) contributes to the ATP binding site.

Homodimer.

The enzyme catalyses XMP + L-glutamine + ATP + H2O = GMP + L-glutamate + AMP + diphosphate + 2 H(+). The protein operates within purine metabolism; GMP biosynthesis; GMP from XMP (L-Gln route): step 1/1. Functionally, catalyzes the synthesis of GMP from XMP. In Lactobacillus gasseri (strain ATCC 33323 / DSM 20243 / BCRC 14619 / CIP 102991 / JCM 1131 / KCTC 3163 / NCIMB 11718 / NCTC 13722 / AM63), this protein is GMP synthase [glutamine-hydrolyzing].